Here is a 499-residue protein sequence, read N- to C-terminus: Probable inactive receptor-like protein kinase At3g56050 (499 aa).

Positions 1–31 are cleaved as a signal peptide; sequence MSNNWKSVRLRLQNRTLVFLLVILSFGSCYS. Residue Asn-14 is glycosylated (N-linked (GlcNAc...) asparagine). At 32-146 the chain is on the extracellular side; that stretch reads LKSQGDGFLE…SKTSSNSTIP (115 aa). A disordered region spans residues 80–121; it reads RDRPVARATPPSSSVSTRPDAKRSSTLPPPQKSPPAQHVSAP. N-linked (GlcNAc...) asparagine glycosylation is present at Asn-142. The helical transmembrane segment at 147–167 threads the bilayer; sequence IVAGCIAGAVFILLLATGVFF. Residues 168-499 are Cytoplasmic-facing; it reads FKSKAGKSVN…WAELEVLSTA (332 aa). The Protein kinase domain maps to 208-474; that stretch reads EDFSNVIGSC…EVTGRLREIT (267 aa).

It is found in the cell membrane. The polypeptide is Probable inactive receptor-like protein kinase At3g56050 (Arabidopsis thaliana (Mouse-ear cress)).